Here is a 63-residue protein sequence, read N- to C-terminus: Large ribosomal subunit protein eL37 (63 aa).

Residues Cys-20, Cys-23, Cys-35, and Cys-38 each contribute to the Zn(2+) site. A C4-type zinc finger spans residues 20–38; the sequence is CRRCGRRAFNVKKGYCAAC.

It belongs to the eukaryotic ribosomal protein eL37 family. In terms of assembly, part of the 50S ribosomal subunit. It depends on Zn(2+) as a cofactor.

Binds to the 23S rRNA. The polypeptide is Large ribosomal subunit protein eL37 (Thermococcus kodakarensis (strain ATCC BAA-918 / JCM 12380 / KOD1) (Pyrococcus kodakaraensis (strain KOD1))).